Consider the following 211-residue polypeptide: MGILDPYKGFGVTFSTMFKKPTTEQYPEQKKETAPRFHGRHQLNRHPDGLEKCVGCELCAWACPADAIYVEGADNTDEQRFSPGERYGRVYQINYLRCILCGLCIEACPTRALTMSNDYELADDSRDDLIFTKEQLLAPLRAGMESPPHPMRLGESETDYYTRDPDAPLPWQVGGSPADEADEAGEAGEAGEAERAADKVPAHGAGSERPR.

A disordered region spans residues P21–H41. 2 consecutive 4Fe-4S ferredoxin-type domains span residues L43–A73 and R89–D118. Residues C53, C56, C59, C63, C98, C101, C104, and C108 each coordinate [4Fe-4S] cluster. A disordered region spans residues R141–R211. The segment covering R152 to D166 has biased composition (basic and acidic residues). Positions D179–G191 are enriched in acidic residues. A compositionally biased stretch (basic and acidic residues) spans E192 to R211.

This sequence belongs to the complex I 23 kDa subunit family. NDH-1 is composed of 14 different subunits. Subunits NuoA, H, J, K, L, M, N constitute the membrane sector of the complex. Requires [4Fe-4S] cluster as cofactor.

The protein resides in the cell membrane. It catalyses the reaction a quinone + NADH + 5 H(+)(in) = a quinol + NAD(+) + 4 H(+)(out). NDH-1 shuttles electrons from NADH, via FMN and iron-sulfur (Fe-S) centers, to quinones in the respiratory chain. The immediate electron acceptor for the enzyme in this species is believed to be ubiquinone. Couples the redox reaction to proton translocation (for every two electrons transferred, four hydrogen ions are translocated across the cytoplasmic membrane), and thus conserves the redox energy in a proton gradient. The chain is NADH-quinone oxidoreductase subunit I from Parafrankia sp. (strain EAN1pec).